We begin with the raw amino-acid sequence, 345 residues long: Ferrochelatase (345 aa).

Residues His215 and Glu296 each contribute to the Fe cation site.

It belongs to the ferrochelatase family.

It localises to the cytoplasm. The enzyme catalyses heme b + 2 H(+) = protoporphyrin IX + Fe(2+). It functions in the pathway porphyrin-containing compound metabolism; protoheme biosynthesis; protoheme from protoporphyrin-IX: step 1/1. Catalyzes the ferrous insertion into protoporphyrin IX. In Rhodopseudomonas palustris (strain BisB5), this protein is Ferrochelatase.